We begin with the raw amino-acid sequence, 83 residues long: Large ribosomal subunit protein bL27 (83 aa).

The disordered stretch occupies residues 1-21; that stretch reads MAHKRSSGAGRNGRDSNPKYL.

This sequence belongs to the bacterial ribosomal protein bL27 family.

In Kosmotoga olearia (strain ATCC BAA-1733 / DSM 21960 / TBF 19.5.1), this protein is Large ribosomal subunit protein bL27.